The primary structure comprises 307 residues: Glycine--tRNA ligase alpha subunit (307 aa).

This sequence belongs to the class-II aminoacyl-tRNA synthetase family. As to quaternary structure, tetramer of two alpha and two beta subunits.

Its subcellular location is the cytoplasm. It catalyses the reaction tRNA(Gly) + glycine + ATP = glycyl-tRNA(Gly) + AMP + diphosphate. This chain is Glycine--tRNA ligase alpha subunit, found in Aeromonas hydrophila subsp. hydrophila (strain ATCC 7966 / DSM 30187 / BCRC 13018 / CCUG 14551 / JCM 1027 / KCTC 2358 / NCIMB 9240 / NCTC 8049).